We begin with the raw amino-acid sequence, 451 residues long: Phosphoglucosamine mutase (451 aa).

S103 functions as the Phosphoserine intermediate in the catalytic mechanism. Mg(2+) contacts are provided by S103, D243, D245, and D247. Phosphoserine is present on S103.

It belongs to the phosphohexose mutase family. Requires Mg(2+) as cofactor. Activated by phosphorylation.

It carries out the reaction alpha-D-glucosamine 1-phosphate = D-glucosamine 6-phosphate. Its function is as follows. Catalyzes the conversion of glucosamine-6-phosphate to glucosamine-1-phosphate. The polypeptide is Phosphoglucosamine mutase (Limosilactobacillus reuteri subsp. reuteri (strain JCM 1112) (Lactobacillus reuteri)).